Consider the following 437-residue polypeptide: Chromosomal replication initiator protein DnaA (437 aa).

The domain I, interacts with DnaA modulators stretch occupies residues 1 to 82 (MIFPIWKKCL…KIIINIEKKK (82 aa)). Residues 82–101 (KLEKKKCIYKKKNIQIYLHS) are domain II. The interval 102-318 (EINKKYQFHN…GILKKIQILS (217 aa)) is domain III, AAA+ region. ATP is bound by residues glycine 146, glycine 148, lysine 149, and threonine 150. Positions 319-437 (ILNKEKITIN…FIYLFNQLNA (119 aa)) are domain IV, binds dsDNA.

Belongs to the DnaA family. As to quaternary structure, oligomerizes as a right-handed, spiral filament on DNA at oriC.

Its subcellular location is the cytoplasm. Functionally, plays an essential role in the initiation and regulation of chromosomal replication. ATP-DnaA binds to the origin of replication (oriC) to initiate formation of the DNA replication initiation complex once per cell cycle. Binds the DnaA box (a 9 base pair repeat at the origin) and separates the double-stranded (ds)DNA. Forms a right-handed helical filament on oriC DNA; dsDNA binds to the exterior of the filament while single-stranded (ss)DNA is stabiized in the filament's interior. The ATP-DnaA-oriC complex binds and stabilizes one strand of the AT-rich DNA unwinding element (DUE), permitting loading of DNA polymerase. After initiation quickly degrades to an ADP-DnaA complex that is not apt for DNA replication. Binds acidic phospholipids. The chain is Chromosomal replication initiator protein DnaA from Buchnera aphidicola subsp. Cinara cedri (strain Cc).